Consider the following 102-residue polypeptide: Large ribosomal subunit protein bL21 (102 aa).

This sequence belongs to the bacterial ribosomal protein bL21 family. As to quaternary structure, part of the 50S ribosomal subunit. Contacts protein L20.

Functionally, this protein binds to 23S rRNA in the presence of protein L20. This Cutibacterium acnes (strain DSM 16379 / KPA171202) (Propionibacterium acnes) protein is Large ribosomal subunit protein bL21.